A 460-amino-acid polypeptide reads, in one-letter code: uncharacterized protein (460 aa).

A TRAM domain is found at 8-66 (PVEKNEFIDVVFEDLTHDGAGVAKVKGYPIFVKNGLPGEEAQIKIIKVKKNFAFGRLMK). Residues cysteine 79, cysteine 85, cysteine 88, and cysteine 166 each contribute to the [4Fe-4S] cluster site. S-adenosyl-L-methionine contacts are provided by glutamine 290, tyrosine 319, glutamate 340, and aspartate 388. The active-site Nucleophile is cysteine 415.

This sequence belongs to the class I-like SAM-binding methyltransferase superfamily. RNA M5U methyltransferase family.

This is an uncharacterized protein from Bacillus cereus (strain ATCC 10987 / NRS 248).